Reading from the N-terminus, the 313-residue chain is L-lactate dehydrogenase (313 aa).

Residues valine 11, aspartate 32, arginine 37, tyrosine 62, and 76–77 each bind NAD(+); that span reads GV. Substrate is bound by residues glutamine 79, arginine 85, and 117–120; that span reads NPVD. NAD(+) contacts are provided by residues 115–117 and serine 143; that span reads ASN. 148 to 151 lines the substrate pocket; it reads DTAR. 2 residues coordinate beta-D-fructose 1,6-bisphosphate: arginine 153 and histidine 168. Residue histidine 175 is the Proton acceptor of the active site. Tyrosine 221 carries the phosphotyrosine modification. Threonine 230 serves as a coordination point for substrate.

Belongs to the LDH/MDH superfamily. LDH family. Homotetramer.

The protein resides in the cytoplasm. The enzyme catalyses (S)-lactate + NAD(+) = pyruvate + NADH + H(+). The protein operates within fermentation; pyruvate fermentation to lactate; (S)-lactate from pyruvate: step 1/1. With respect to regulation, allosterically activated by fructose 1,6-bisphosphate (FBP). Catalyzes the conversion of lactate to pyruvate. In Geotalea daltonii (strain DSM 22248 / JCM 15807 / FRC-32) (Geobacter daltonii), this protein is L-lactate dehydrogenase.